The primary structure comprises 372 residues: PqqA peptide cyclase (372 aa).

A Radical SAM core domain is found at 4–219 (APPPLSVLLE…VDTARRELGD (216 aa)). [4Fe-4S] cluster is bound by residues C18, C22, and C25. The tract at residues 342-372 (ATAEREAAAPAPEFIYRRPERPAPATADTLE) is disordered.

Belongs to the radical SAM superfamily. PqqE family. As to quaternary structure, interacts with PqqD. The interaction is necessary for activity of PqqE. Requires [4Fe-4S] cluster as cofactor.

The catalysed reaction is [PQQ precursor protein] + S-adenosyl-L-methionine = E-Y cross-linked-[PQQ precursor protein] + 5'-deoxyadenosine + L-methionine + H(+). Its pathway is cofactor biosynthesis; pyrroloquinoline quinone biosynthesis. Functionally, catalyzes the cross-linking of a glutamate residue and a tyrosine residue in the PqqA protein as part of the biosynthesis of pyrroloquinoline quinone (PQQ). In Xanthomonas oryzae pv. oryzae (strain MAFF 311018), this protein is PqqA peptide cyclase.